The primary structure comprises 80 residues: Conotoxin ArMKLT2-0321 (80 aa).

The signal sequence occupies residues 1-21 (MKLTCVLIIAMLFLIVCQLNT). The propeptide occupies 22–48 (ADDSTDKQEYRAVKLRDAMRNFKGSKR). 3 disulfide bridges follow: cysteine 50/cysteine 63, cysteine 57/cysteine 68, and cysteine 62/cysteine 77.

This sequence belongs to the conotoxin O1 superfamily. In terms of tissue distribution, expressed by the venom duct.

It localises to the secreted. The sequence is that of Conotoxin ArMKLT2-0321 from Conus arenatus (Sand-dusted cone).